The following is a 468-amino-acid chain: Transcription factor ste11 (468 aa).

Residues 1 to 21 (MSASLTAEQKDQKSSVKRPLN) are disordered. Residues 16–80 (VKRPLNSFML…KHMLENPEYK (65 aa)) constitute a DNA-binding region (HMG box). Residue Thr173 is modified to Phosphothreonine. A phosphoserine mark is found at Ser209, Ser211, and Ser218. Polar residues-rich tracts occupy residues 249-263 (PSLE…SNCS) and 274-285 (GTVSEQSNSDSP). The disordered stretch occupies residues 249–290 (PSLEANLPQNSSNCSARRVPKFDSKGTVSEQSNSDSPELSAD).

Phosphorylation results in inactivation.

Its subcellular location is the nucleus. It localises to the cytoplasm. Functionally, key transcription factor for sexual development. Activates the transcription of the matp, matm, mei2, mfm, ste6 and rgs1 genes. Binds specifically to a DNA fragment carrying a 10-base motif 5'-TTCTTTGTTY-3'. The sequence is that of Transcription factor ste11 (ste11) from Schizosaccharomyces pombe (strain 972 / ATCC 24843) (Fission yeast).